Reading from the N-terminus, the 320-residue chain is Biotin synthase (320 aa).

The Radical SAM core domain occupies 45 to 274 (NDLQKASLLS…DSRIRLSAGR (230 aa)). The [4Fe-4S] cluster site is built by Cys60, Cys64, and Cys67. Residues Cys105, Cys137, Cys197, and Arg269 each coordinate [2Fe-2S] cluster.

Belongs to the radical SAM superfamily. Biotin synthase family. As to quaternary structure, homodimer. Requires [4Fe-4S] cluster as cofactor. [2Fe-2S] cluster serves as cofactor.

The enzyme catalyses (4R,5S)-dethiobiotin + (sulfur carrier)-SH + 2 reduced [2Fe-2S]-[ferredoxin] + 2 S-adenosyl-L-methionine = (sulfur carrier)-H + biotin + 2 5'-deoxyadenosine + 2 L-methionine + 2 oxidized [2Fe-2S]-[ferredoxin]. The protein operates within cofactor biosynthesis; biotin biosynthesis; biotin from 7,8-diaminononanoate: step 2/2. Its function is as follows. Catalyzes the conversion of dethiobiotin (DTB) to biotin by the insertion of a sulfur atom into dethiobiotin via a radical-based mechanism. The chain is Biotin synthase from Beijerinckia indica subsp. indica (strain ATCC 9039 / DSM 1715 / NCIMB 8712).